Here is a 587-residue protein sequence, read N- to C-terminus: 5-aminolevulinate synthase, erythroid-specific, mitochondrial (587 aa).

The N-terminal 49 residues, 1–49 (MVTAAMLLQCCPVLARGPTSLLGKVVKTHQFLFGIGRCPILATQGPNCS), are a transit peptide targeting the mitochondrion. R163 is a binding site for succinyl-CoA. 2 residues coordinate pyridoxal 5'-phosphate: C258 and F259. Positions 280 and 299 each coordinate succinyl-CoA. Residues S332, H360, and T388 each contribute to the pyridoxal 5'-phosphate site. The active site involves K391. An N6-(pyridoxal phosphate)lysine modification is found at K391. Pyridoxal 5'-phosphate is bound by residues T420 and T421. T508 lines the succinyl-CoA pocket.

This sequence belongs to the class-II pyridoxal-phosphate-dependent aminotransferase family. Homodimer. Interacts with SUCLA2. As to quaternary structure, interacts with SUCLA2. Requires pyridoxal 5'-phosphate as cofactor. In terms of tissue distribution, erythroid-specific.

It is found in the mitochondrion inner membrane. The enzyme catalyses succinyl-CoA + glycine + H(+) = 5-aminolevulinate + CO2 + CoA. It functions in the pathway porphyrin-containing compound metabolism; protoporphyrin-IX biosynthesis; 5-aminolevulinate from glycine: step 1/1. Down-regulated by itaconyl-CoA which acts as a competitive inhibitor of succinyl-CoA substrate. Functionally, catalyzes the pyridoxal 5'-phosphate (PLP)-dependent condensation of succinyl-CoA and glycine to form aminolevulinic acid (ALA), with CoA and CO2 as by-products. Contributes significantly to heme formation during erythropoiesis. Its function is as follows. Catalyzes the pyridoxal 5'-phosphate (PLP)-dependent condensation of succinyl-CoA and glycine to form aminolevulinic acid (ALA), with CoA and CO2 as by-products. Catalytic activity is 75-85% of isoform 1 activity. In terms of biological role, catalyzes the pyridoxal 5'-phosphate (PLP)-dependent condensation of succinyl-CoA and glycine to form aminolevulinic acid (ALA), with CoA and CO2 as by-products. Catalytic activity is 65-75% of isoform 1 activity. The protein is 5-aminolevulinate synthase, erythroid-specific, mitochondrial of Homo sapiens (Human).